We begin with the raw amino-acid sequence, 653 residues long: MAAEMDWDKTVGAAEDVRRIFEHIPAILVGLEGPDHRFVAVNAAYRGFSPLLDTVGQPAREVYPELEGQQIYEMLDRVYQTGEPQSGSEWRLQTDYDGSGVEERYFDFVVTPRRRADGSIEGVQLIVDDVTSRVRARQAAEARVEELSERYRNVRDSATVMQQALLAASVPVVPGADIAAEYLVAAEDTAAGGDWFDALALGDRLVLVVGDVVGHGVEAAAVMSQLRTALRMQISAGYTVVEALEAVDRFHKQVPGSKSATMCVGSLDFTSGEFQYCTAGHPPPLLVTADASARYVEPTGAGPLGSGTGFPVRSEVLNIGDAILFYTDGLIERPGRPLEASTAEFADLAASIASGSGGFVLDAPARPIDRLCSDTLELLLRSTGYNDDVTLLAMQRRAPTPPLHITLDATINAARTVRAQLREWLAEIGADHSDIADIVHAISEFVENAVEHGYATDVSKGIVVAAALAGDGNVRASVIDRGQWKDHRDGARGRGRGLAMAEALVSEARIMHGAGGTTATLTHRLSRPARFVTDTMVRRAAFQQTIDSEFVSLVESGRIVVRGDVDSTTAATLDRQIAVESRSGIAPVTIDLSAVTHLGSAGVGALAAACDRARKQGTECVLVAPPGSPAHHVLSLVQLPVVGADTEDIFAQE.

Phosphothreonine; by PknD is present on residues threonine 54 and threonine 81. The PAC domain occupies 86-142 (SGSEWRLQTDYDGSGVEERYFDFVVTPRRRADGSIEGVQLIVDDVTSRVRARQAAEA). A PPM-type phosphatase domain is found at 177–396 (DIAAEYLVAA…DDVTLLAMQR (220 aa)). Mn(2+) contacts are provided by aspartate 211 and valine 212. The residue at position 299 (threonine 299) is a Phosphothreonine; by PknD. The Mn(2+) site is built by aspartate 328 and aspartate 387. Threonine 390 carries the post-translational modification Phosphothreonine; by PknD. Positions 397-544 (RAPTPPLHIT…TMVRRAAFQQ (148 aa)) are anti-sigma factor kinase region. At serine 506 the chain carries Phosphoserine; by PknD. A phosphothreonine; by PknD mark is found at threonine 520 and threonine 568. One can recognise an STAS domain in the interval 546–653 (IDSEFVSLVE…ADTEDIFAQE (108 aa)). Serine 600 carries the phosphoserine; by autocatalysis modification.

As to quaternary structure, exists in solution as both monomer and dimer. Both the phosphorylated and unphosphorylated proteins form extended dimers. Interacts with SigF. Can efficiently bind to SigF independently of its autophosphorylation. Interaction between SigF and Rv1364c is reduced significantly upon the phosphorylation of both proteins by PknD. Requires Mn(2+) as cofactor. It depends on Mg(2+) as a cofactor. In terms of processing, autophosphorylated. Phosphorylated by PknD on multiple threonine and serine residues. Phosphorylation is antagonized by the phosphatase activity.

It carries out the reaction O-phospho-L-seryl-[protein] + H2O = L-seryl-[protein] + phosphate. It catalyses the reaction O-phospho-L-threonyl-[protein] + H2O = L-threonyl-[protein] + phosphate. The enzyme catalyses L-seryl-[protein] + ATP = O-phospho-L-seryl-[protein] + ADP + H(+). The catalysed reaction is L-threonyl-[protein] + ATP = O-phospho-L-threonyl-[protein] + ADP + H(+). Its activity is regulated as follows. The phosphatase domain is activated by the anti-sigma factor kinase domain. Functionally, primarily acts as an independent SigF regulator that is sensitive to the osmosensory signal, mediating the cross talk of PknD with the SigF regulon. Possesses both phosphatase and kinase activities. The kinase domain functions as a classic anti-sigma factor-like kinase to phosphorylate the anti-anti-sigma factor domain at the canonical regulatory site, and the phosphatase domain antagonizes this activity. The polypeptide is Multidomain regulatory protein Rv1364c (Mycobacterium tuberculosis (strain ATCC 25618 / H37Rv)).